The following is a 412-amino-acid chain: Serine hydroxymethyltransferase (412 aa).

Residues Leu117 and 121 to 123 each bind (6S)-5,6,7,8-tetrahydrofolate; that span reads GHL. Position 226 is an N6-(pyridoxal phosphate)lysine (Lys226).

This sequence belongs to the SHMT family. Homodimer. Pyridoxal 5'-phosphate is required as a cofactor.

It localises to the cytoplasm. It catalyses the reaction (6R)-5,10-methylene-5,6,7,8-tetrahydrofolate + glycine + H2O = (6S)-5,6,7,8-tetrahydrofolate + L-serine. The protein operates within one-carbon metabolism; tetrahydrofolate interconversion. It functions in the pathway amino-acid biosynthesis; glycine biosynthesis; glycine from L-serine: step 1/1. Catalyzes the reversible interconversion of serine and glycine with tetrahydrofolate (THF) serving as the one-carbon carrier. This reaction serves as the major source of one-carbon groups required for the biosynthesis of purines, thymidylate, methionine, and other important biomolecules. Also exhibits THF-independent aldolase activity toward beta-hydroxyamino acids, producing glycine and aldehydes, via a retro-aldol mechanism. This is Serine hydroxymethyltransferase from Staphylococcus aureus (strain MW2).